The sequence spans 45 residues: Unknown protein from spots 23/28/205 of 2D-PAGE of thylakoid (45 aa).

It is found in the plastid. The protein localises to the chloroplast thylakoid. The chain is Unknown protein from spots 23/28/205 of 2D-PAGE of thylakoid from Pisum sativum (Garden pea).